We begin with the raw amino-acid sequence, 118 residues long: BLOC-1-related complex subunit 8 (118 aa).

Residues 98–107 (KEQISNSQGR) are compositionally biased toward polar residues. The segment at 98-118 (KEQISNSQGRSPHVSAPSASS) is disordered.

Belongs to the BORCS8 family.

The protein resides in the lysosome membrane. Functionally, as part of a BORC-like complex, it may play a role in the movement and localization of lysosomes at the cell periphery. Associated with the cytosolic face of lysosomes, this complex may couple lysosomes to microtubule plus-end-directed kinesin motors, driving lysosome movement toward the cell periphery. The sequence is that of BLOC-1-related complex subunit 8 from Tetraodon nigroviridis (Spotted green pufferfish).